Here is a 268-residue protein sequence, read N- to C-terminus: Exodeoxyribonuclease III (268 aa).

Glutamate 34 is a Mg(2+) binding site. Residue tyrosine 109 is part of the active site. 3 residues coordinate Mg(2+): aspartate 151, asparagine 153, and aspartate 258. Residue aspartate 151 is the Proton donor/acceptor of the active site.

This sequence belongs to the DNA repair enzymes AP/ExoA family. As to quaternary structure, monomer. Requires Mg(2+) as cofactor. Mn(2+) is required as a cofactor.

It catalyses the reaction Exonucleolytic cleavage in the 3'- to 5'-direction to yield nucleoside 5'-phosphates.. Major apurinic-apyrimidinic endonuclease of E.coli. It removes the damaged DNA at cytosines and guanines by cleaving on the 3'-side of the AP site by a beta-elimination reaction. It exhibits 3'-5'-exonuclease, 3'-phosphomonoesterase, 3'-repair diesterase and ribonuclease H activities. The chain is Exodeoxyribonuclease III (xthA) from Salmonella typhi.